Consider the following 72-residue polypeptide: LITAF domain-containing protein (72 aa).

In terms of domain architecture, LITAF spans 1 to 71 (MPVQAVCPYC…CQRELFYYHR (71 aa)). Zn(2+) contacts are provided by Cys-7 and Cys-10. The membrane-binding amphipathic helix stretch occupies residues 22–45 (PGALTWLLCTTLFLFGYVLGCCFL). Residues Cys-59 and Cys-62 each coordinate Zn(2+).

The protein belongs to the CDIP1/LITAF family.

It is found in the membrane. The chain is LITAF domain-containing protein from Homo sapiens (Human).